The sequence spans 5541 residues: Malpibaldin synthetase (5541 aa).

Residues 1–13 (MGDKRPDGIKSAE) are compositionally biased toward basic and acidic residues. The disordered stretch occupies residues 1 to 26 (MGDKRPDGIKSAESHGQPSAPFGAEN). The condensation 1 stretch occupies residues 137–378 (KEDDIARDES…IDIISPAEKT (242 aa)). The interval 401–799 (FEEQVDKSPD…GRNDDQVKIR (399 aa)) is adenylation 1. Positions 901–975 (VPCGETEDAI…VLAQDLSKHQ (75 aa)) constitute a Carrier 1 domain. Position 936 is an O-(pantetheine 4'-phosphoryl)serine (S936). The segment at 1021 to 1469 (QDVYSLAPLQ…LPLDERTKLL (449 aa)) is dual epimerase/condensation (E/C) domain 1. The adenylation 2 stretch occupies residues 1489–1899 (FEQQVKQSPI…GRNDDQIKIR (411 aa)). A Carrier 2 domain is found at 2001 to 2075 (SPQGRIECAL…SFAQAFKGQL (75 aa)). S2036 is modified (O-(pantetheine 4'-phosphoryl)serine). Residues 2095 to 2537 (ELSFSQQRLW…LGSTEEELLL (443 aa)) are condensation 2. Positions 2557 to 2956 (FEDQVERSPD…GRNDDQVKIR (400 aa)) are adenylation 3. Residues 3058-3132 (EPQGEVEMKL…VLAASITRGC (75 aa)) enclose the Carrier 3 domain. O-(pantetheine 4'-phosphoryl)serine is present on S3093. Residues 3182–3616 (QDIYSLSPLQ…VIPAEEHDLL (435 aa)) form a dual epimerase/condensation (E/C) domain 2 region. Positions 3637 to 4038 (FENQVRERPE…GRNDEQVKIR (402 aa)) are adenylation 4. The Carrier 4 domain occupies 4140-4214 (APRGDIEISL…VLAASLNTHQ (75 aa)). S4175 carries the O-(pantetheine 4'-phosphoryl)serine modification. The dual epimerase/condensation (E/C) domain 3 stretch occupies residues 4260-4695 (VQDVYSLSPL…VIPAEEHDLL (436 aa)). The interval 4716-5117 (FENQVRERPE…GRNDEQVKIR (402 aa)) is adenylation 5. The Carrier 5 domain occupies 5219–5294 (LPSGDVEIGL…ELAQKLVQGG (76 aa)). S5254 carries the O-(pantetheine 4'-phosphoryl)serine modification. Residues 5315 to 5523 (PLFCIHSGLG…VECTHIEMDK (209 aa)) form a thioesterase (TE) domain region.

This sequence belongs to the NRP synthetase family.

Functionally, nonribosomal peptide synthetase that catalyzes the biosynthesis of the hydrophobic cyclopentapeptides malpibaldins, natural products that show biosurfactant activities. Module 3 shows promiscuous adenylation (accepting either Trp, Phe or Tyr) leading to the parallel production of multiple products from one NRPS assembly line, including malpibaldin A corresponding to cyclo(-L-Leu-D-Leu-D-Phe-L-Leu-D-Val-), malpibaldin B corresponding to cyclo(-L-Leu-D-Leu-D-Tyr-L-Leu-D-Val-) and malpibaldin C corresponding to cyclo(-Leu-Leu-Trp-Leu-Val-). This is Malpibaldin synthetase from Mortierella alpina (Oleaginous fungus).